Here is a 317-residue protein sequence, read N- to C-terminus: Cell division protein FtsX (317 aa).

At 1 to 39 the chain is on the cytoplasmic side; it reads MAIVRHKQPPLRRFMMYWVDHARQAFSSLGELWRNPLAS. The chain crosses the membrane as a helical span at residues 40 to 60; it reads LMTLAVLGVSLALPSCFHVLL. At 61–188 the chain is on the periplasmic side; that stretch reads KNAEVVEGSW…LQGIMNLLRH (128 aa). The chain crosses the membrane as a helical span at residues 189–209; that stretch reads TITGIAVLLLSAVLLIVGNTL. Residues 210 to 241 are Cytoplasmic-facing; it reads RLNILNQRSEIEVLKLVGATDAFIHRPFLYTG. Residues 242-262 traverse the membrane as a helical segment; that stretch reads IWFGVIGGMLAWWLTEVMVIW. The Periplasmic segment spans residues 263–280; sequence SEGVVNELAGLYNSNFRL. Residues 281–301 form a helical membrane-spanning segment; it reads VGMGAVDGINLILLGALLGLI. At 302-317 the chain is on the cytoplasmic side; sequence ASWFSVHRHIRDIEPS.

Belongs to the ABC-4 integral membrane protein family. FtsX subfamily. As to quaternary structure, forms a membrane-associated complex with FtsE.

The protein resides in the cell inner membrane. Its function is as follows. Part of the ABC transporter FtsEX involved in cellular division. Encoded in an operon consisting of genes ftsY, ftsE and ftsX. This chain is Cell division protein FtsX, found in Aeromonas hydrophila.